The primary structure comprises 125 residues: Small ribosomal subunit protein uS13 (125 aa).

The tract at residues 97–125 is disordered; the sequence is PVRGQKTRSNARTRKGPRPSRIKTKKKSS. Over residues 101 to 125 the composition is skewed to basic residues; sequence QKTRSNARTRKGPRPSRIKTKKKSS.

This sequence belongs to the universal ribosomal protein uS13 family. Part of the 30S ribosomal subunit. Forms a loose heterodimer with protein S19. Forms two bridges to the 50S subunit in the 70S ribosome.

Its function is as follows. Located at the top of the head of the 30S subunit, it contacts several helices of the 16S rRNA. In the 70S ribosome it contacts the 23S rRNA (bridge B1a) and protein L5 of the 50S subunit (bridge B1b), connecting the 2 subunits; these bridges are implicated in subunit movement. Contacts the tRNAs in the A and P-sites. The chain is Small ribosomal subunit protein uS13 from Thermotoga neapolitana (strain ATCC 49049 / DSM 4359 / NBRC 107923 / NS-E).